The sequence spans 284 residues: Phosphate import ATP-binding protein PstB 2 (284 aa).

The span at 1–22 (MTLLSTLRGISSPARQQPGTQS) shows a compositional bias: polar residues. Residues 1-29 (MTLLSTLRGISSPARQQPGTQSESRRGGD) form a disordered region. Positions 36 to 278 (LAVAGVSHGF…PDDARARKFI (243 aa)) constitute an ABC transporter domain. 68-75 (GPSGTGKT) lines the ATP pocket.

The protein belongs to the ABC transporter superfamily. Phosphate importer (TC 3.A.1.7) family. The complex is composed of two ATP-binding proteins (PstB), two transmembrane proteins (PstC and PstA) and a solute-binding protein (PstS).

The protein localises to the cell membrane. It catalyses the reaction phosphate(out) + ATP + H2O = ADP + 2 phosphate(in) + H(+). Functionally, part of the ABC transporter complex PstSACB involved in phosphate import. Responsible for energy coupling to the transport system. In Natronomonas pharaonis (strain ATCC 35678 / DSM 2160 / CIP 103997 / JCM 8858 / NBRC 14720 / NCIMB 2260 / Gabara) (Halobacterium pharaonis), this protein is Phosphate import ATP-binding protein PstB 2.